A 177-amino-acid polypeptide reads, in one-letter code: Transcriptional repressor NrdR (177 aa).

A zinc finger spans residues 3–34; that stretch reads CPYCGGSETQVKDSRPSEDGAAIRRRRVCPDC. An ATP-cone domain is found at 49–139; it reads VVVLKRSGKR…VYKNFREARD (91 aa). Residues 148–177 are disordered; it reads SDGMPVPAAAPEAEGDPEPEASGRRRAGRP.

The protein belongs to the NrdR family. Requires Zn(2+) as cofactor.

In terms of biological role, negatively regulates transcription of bacterial ribonucleotide reductase nrd genes and operons by binding to NrdR-boxes. This Methylobacterium radiotolerans (strain ATCC 27329 / DSM 1819 / JCM 2831 / NBRC 15690 / NCIMB 10815 / 0-1) protein is Transcriptional repressor NrdR.